The following is a 477-amino-acid chain: Tripartite motif-containing protein 72 (477 aa).

Residues Leu14, Pro17, Pro29, Cys31, Thr34, Gln37, Thr53, Pro56, Gly86, Leu89, Val97, Glu100, Leu105, Gly108, Gly114, and Lys117 each contribute to the Zn(2+) site. The RING-type zinc-finger motif lies at 16–59; that stretch reads CPLCLELFRAPVTPECGHTFCQGCLTGAPKNQDQNGSTPCPTCQ. Residues 83–124 form a B box-type zinc finger; sequence VPKGHCLEHLDPLSVYCEQDKELICGVCASLGKHKGHNIITA. Residues 135–232 adopt a coiled-coil conformation; it reads LPQQQVILQE…QMDGVLKDVE (98 aa). A B30.2/SPRY domain is found at 272–476; that stretch reads DEFKFQVWRK…LKIFYPPAEQ (205 aa).

This sequence belongs to the TRIM/RBCC family. Homodimer. Homooligomer; disulfide-linked. Oligomerizes on the phospholipid membrane. In terms of processing, disulfide bond formation at Cys-244 occurs in case of membrane damage that cause the entry of the oxidized milieu of the extracellular space, resulting in homooligomerization.

The protein localises to the cell membrane. It is found in the sarcolemma. The protein resides in the cytoplasmic vesicle membrane. It carries out the reaction S-ubiquitinyl-[E2 ubiquitin-conjugating enzyme]-L-cysteine + [acceptor protein]-L-lysine = [E2 ubiquitin-conjugating enzyme]-L-cysteine + N(6)-ubiquitinyl-[acceptor protein]-L-lysine.. It participates in protein modification; protein ubiquitination. With respect to regulation, specifically binds phosphatidylserine. The binding to phospholipids enhances ubiquitination activity. Functionally, muscle-specific E3 ubiquitin-protein ligase that plays a central role in cell membrane repair by nucleating the assembly of the repair machinery at injury sites. Acts as a sensor of oxidation: upon membrane damage, entry of extracellular oxidative environment results in disulfide bond formation and homooligomerization at the injury site. This oligomerization acts as a nucleation site for recruitment of TRIM72-containing vesicles to the injury site, leading to membrane patch formation. Probably acts upstream of the Ca(2+)-dependent membrane resealing process. Required for transport of DYSF to sites of cell injury during repair patch formation. Regulates membrane budding and exocytosis. May be involved in the regulation of the mobility of KCNB1-containing endocytic vesicles. In Xenopus tropicalis (Western clawed frog), this protein is Tripartite motif-containing protein 72 (trim72).